Consider the following 208-residue polypeptide: MKGLFVTIEGPEGSGKTTLIQGLLPYFEQKEQKVMATREPGGIAISEEIRTILHKQEYTMMEARTEALLYAAARRQHLVEKVMPALNKDYLVLCDRFIDSSLAYQGYARGLGMDKVFEINRFATEDCMPSLTIYLDIEPEVGLARIAKDAGREVNRLDMEDISFHKRVREGYLQVVERFSDRIVLVNADQPMEKLIEEVIQVIEDKLL.

10-17 (GPEGSGKT) is a binding site for ATP.

Belongs to the thymidylate kinase family.

The enzyme catalyses dTMP + ATP = dTDP + ADP. Phosphorylation of dTMP to form dTDP in both de novo and salvage pathways of dTTP synthesis. This Bacillus cereus (strain Q1) protein is Thymidylate kinase.